A 478-amino-acid polypeptide reads, in one-letter code: Transcript termination protein A18 (478 aa).

In terms of domain architecture, Helicase ATP-binding spans 98-254; sequence KVELKRPMYV…NDVINVSNSS (157 aa). 111 to 118 contributes to the ATP binding site; the sequence is LACGFGKT. The DESH box motif lies at 204–207; it reads DESH. The region spanning 307-454 is the Helicase C-terminal domain; sequence ILDTIIYDFE…IITLAIEKLG (148 aa).

It belongs to the helicase family. Poxviruses subfamily. As to quaternary structure, interacts with G2. Might be part of a transcription complex composed at least of G2, A18, and H5.

The protein resides in the virion. Its function is as follows. DNA helicase which seems to act as a postreplicative transcription termination factor. Involved in ATP-dependent release of nascent RNA. Forms a stable complex with single-stranded DNA, and to a lesser extent RNA. The chain is Transcript termination protein A18 from Erythrocebus patas (Red guenon).